A 503-amino-acid chain; its full sequence is MVKAEHESRALAIFGTASDVGKSIVATALCRIFNNAGIDVAPYKAQNMSNNSGVTPDGCEIGRAQIVQAEAARVVPTADMNPVLLKPNSDTGAQVVLQGKVCSTETAKGYFRDTSLWAEAARESLERLMKRHEVVVIEGAGSCAEMNLYDRDFVNFRTARLSGASVILVADIDRGGVFGQVVGTLAVLPAEDRALVKGVIINRFRGDIDLFRDGVEMLESMTGIPVLGVIPYFRGFAIDAEDAVPLSAKVDPAGGPEEGKIGVAAIYFPHISNFTDLSPLEHDPAVELHYLHYPRSLKGYKALILPGSKNVRGDLAWLYSLGWEAEIRAFRAEGGIIMGICGGYQMLGNSIADPYGVEGSAGTTKALALLDVETVLEQDKCLANARGTVIGTSAEASGYEIHMGRSVVSDLCTPFIRVTARNNRPEDELDGAVSSDGRVMGSYFHALFDESSVKQWFLSLLEPSYRLQKHEKGRQESYELLADHFSSHLDLNKIFTIIDKVHS.

Positions 260 to 453 constitute a GATase cobBQ-type domain; the sequence is KIGVAAIYFP…FHALFDESSV (194 aa). Catalysis depends on Cys-341, which acts as the Nucleophile. His-445 is an active-site residue.

Belongs to the CobB/CobQ family. CobQ subfamily.

Its pathway is cofactor biosynthesis; adenosylcobalamin biosynthesis. Its function is as follows. Catalyzes amidations at positions B, D, E, and G on adenosylcobyrinic A,C-diamide. NH(2) groups are provided by glutamine, and one molecule of ATP is hydrogenolyzed for each amidation. In Pelodictyon phaeoclathratiforme (strain DSM 5477 / BU-1), this protein is Cobyric acid synthase.